The primary structure comprises 239 residues: Ribonuclease PH (239 aa).

Phosphate contacts are provided by residues R86 and G124 to R126.

The protein belongs to the RNase PH family. Homohexameric ring arranged as a trimer of dimers.

It carries out the reaction tRNA(n+1) + phosphate = tRNA(n) + a ribonucleoside 5'-diphosphate. In terms of biological role, phosphorolytic 3'-5' exoribonuclease that plays an important role in tRNA 3'-end maturation. Removes nucleotide residues following the 3'-CCA terminus of tRNAs; can also add nucleotides to the ends of RNA molecules by using nucleoside diphosphates as substrates, but this may not be physiologically important. Probably plays a role in initiation of 16S rRNA degradation (leading to ribosome degradation) during starvation. The protein is Ribonuclease PH of Anaeromyxobacter dehalogenans (strain 2CP-C).